The following is a 205-amino-acid chain: Peptidyl-tRNA hydrolase (205 aa).

Tyrosine 14 lines the tRNA pocket. Histidine 19 acts as the Proton acceptor in catalysis. Residues tyrosine 64, asparagine 66, and asparagine 112 each contribute to the tRNA site.

Belongs to the PTH family. In terms of assembly, monomer.

It is found in the cytoplasm. It catalyses the reaction an N-acyl-L-alpha-aminoacyl-tRNA + H2O = an N-acyl-L-amino acid + a tRNA + H(+). In terms of biological role, hydrolyzes ribosome-free peptidyl-tRNAs (with 1 or more amino acids incorporated), which drop off the ribosome during protein synthesis, or as a result of ribosome stalling. Catalyzes the release of premature peptidyl moieties from peptidyl-tRNA molecules trapped in stalled 50S ribosomal subunits, and thus maintains levels of free tRNAs and 50S ribosomes. The sequence is that of Peptidyl-tRNA hydrolase from Parvibaculum lavamentivorans (strain DS-1 / DSM 13023 / NCIMB 13966).